Consider the following 387-residue polypeptide: Pepsin II-1 (387 aa).

An N-terminal signal peptide occupies residues 1 to 15; sequence MKWLLLLGLLALSEC. Positions 16-59 are cleaved as a propeptide — activation peptide; it reads IVHKVPLVRKKSLRKNLIEKGLLQDYLKTHTPNLATKYFPKETF. Positions 75–384 constitute a Peptidase A1 domain; that stretch reads YFGTISIGTP…DRANNQVGLA (310 aa). Residue aspartate 93 is part of the active site. Cysteine 106 and cysteine 111 are disulfide-bonded. Serine 129 bears the Phosphoserine mark. Cysteines 267 and 271 form a disulfide. The active site involves aspartate 276. A disulfide bridge connects residues cysteine 310 and cysteine 343.

The protein belongs to the peptidase A1 family.

It localises to the secreted. It catalyses the reaction Preferential cleavage: hydrophobic, preferably aromatic, residues in P1 and P1' positions. Cleaves 1-Phe-|-Val-2, 4-Gln-|-His-5, 13-Glu-|-Ala-14, 14-Ala-|-Leu-15, 15-Leu-|-Tyr-16, 16-Tyr-|-Leu-17, 23-Gly-|-Phe-24, 24-Phe-|-Phe-25 and 25-Phe-|-Tyr-26 bonds in the B chain of insulin.. Functionally, shows particularly broad specificity; although bonds involving phenylalanine and leucine are preferred, many others are also cleaved to some extent. The protein is Pepsin II-1 of Oryctolagus cuniculus (Rabbit).